A 213-amino-acid polypeptide reads, in one-letter code: Uridine kinase (213 aa).

ATP is bound at residue 15–22 (GASASGKS).

It belongs to the uridine kinase family.

It is found in the cytoplasm. It carries out the reaction uridine + ATP = UMP + ADP + H(+). The catalysed reaction is cytidine + ATP = CMP + ADP + H(+). It functions in the pathway pyrimidine metabolism; CTP biosynthesis via salvage pathway; CTP from cytidine: step 1/3. It participates in pyrimidine metabolism; UMP biosynthesis via salvage pathway; UMP from uridine: step 1/1. This is Uridine kinase from Escherichia coli O157:H7.